Here is a 495-residue protein sequence, read N- to C-terminus: MEPVQKLQIPYKSIRLSDGTEYQSYHTEGALSGKQPADYKNGIPAFRKEWIQKRFNHSNHSQMYFAKKGIITEEMRYAAFRENMEPEFVRSEIACGRAILPSNRNHPELEPMVIGKNFLVKINANIGNSTFSSSIEEEVEKLHWAIKWGADTVMDLSTGKNIHETREWILRNSPVPIGTVPIYQALEKVKGKTENLNIQIFLETLEEQAEQGVDYFTIHAGVLLRYIPLTTNRITGIVSRGGSILAKWCQAHHKENFLYTHFDEILKVMKKYGVSISLGDGLRPGSIADANDKAQFSELETLGELTQLAWKEDIQVMIEGPGHVPMNLIKENVDLQTKICQEAPFYTLGPIVTDIAPGYDHITSAIGAAMIGWYGTAMLCYVTPKEHLGLPNKEDVKQGVIAYKIAAHAADLAKGHPGAIDRDNLLSKARFEFRWEDQFSLSLDPETAKTFHDEMLPQDRMKTAHFCSMCGPHFCSMNLTQELRKFAQEKEIQES.

Substrate is bound by residues Asn-125, Met-154, Tyr-183, His-219, 239–241 (SRG), 280–283 (DGLR), and Glu-319. Residue His-323 coordinates Zn(2+). Tyr-346 is a binding site for substrate. Zn(2+) is bound at residue His-387. Positions 467, 470, and 475 each coordinate [4Fe-4S] cluster.

It belongs to the ThiC family. The cofactor is [4Fe-4S] cluster.

It carries out the reaction 5-amino-1-(5-phospho-beta-D-ribosyl)imidazole + S-adenosyl-L-methionine = 4-amino-2-methyl-5-(phosphooxymethyl)pyrimidine + CO + 5'-deoxyadenosine + formate + L-methionine + 3 H(+). The protein operates within cofactor biosynthesis; thiamine diphosphate biosynthesis. In terms of biological role, catalyzes the synthesis of the hydroxymethylpyrimidine phosphate (HMP-P) moiety of thiamine from aminoimidazole ribotide (AIR) in a radical S-adenosyl-L-methionine (SAM)-dependent reaction. This chain is Phosphomethylpyrimidine synthase, found in Leptospira interrogans serogroup Icterohaemorrhagiae serovar copenhageni (strain Fiocruz L1-130).